The chain runs to 487 residues: Cysteine--tRNA ligase (487 aa).

Cys-29 contacts Zn(2+). Positions Val-31 to His-41 match the 'HIGH' region motif. Zn(2+)-binding residues include Cys-209, His-234, and Glu-238. The 'KMSKS' region motif lies at Lys-266–Ser-270. Lys-269 contacts ATP.

The protein belongs to the class-I aminoacyl-tRNA synthetase family. Monomer. Zn(2+) is required as a cofactor.

It is found in the cytoplasm. It carries out the reaction tRNA(Cys) + L-cysteine + ATP = L-cysteinyl-tRNA(Cys) + AMP + diphosphate. The polypeptide is Cysteine--tRNA ligase (Sulfurihydrogenibium sp. (strain YO3AOP1)).